Consider the following 362-residue polypeptide: Type-1 angiotensin II receptor A (362 aa).

The Extracellular portion of the chain corresponds to 1–26 (MSNASTVETSDVERIAVNCSKSGMHN). Residues Asn-3 and Asn-18 are each glycosylated (N-linked (GlcNAc...) asparagine). 2 cysteine pairs are disulfide-bonded: Cys-19–Cys-273 and Cys-102–Cys-181. Residues 27 to 56 (YIFIAIPIIYSTIFVVGVFGNSMVVIVIYS) form a helical membrane-spanning segment. Over 57-62 (YMKMKT) the chain is Cytoplasmic. A helical membrane pass occupies residues 63–90 (VASIFLMNLALSDLCFVITLPLWAAYTA). Residues 91–99 (MHYHWPFGN) lie on the Extracellular side of the membrane. A helical membrane pass occupies residues 100–126 (FLCKVASTAITLNLYTTVFLLTCLSID). The Cytoplasmic portion of the chain corresponds to 127-142 (RYSAIVHPMKSRIWRT). Residues 143 to 166 (AMVARLTCVGIWLVAFLASMPSII) form a helical membrane-spanning segment. Topologically, residues 167 to 191 (YRQIYLFHDTNQTVCAIVYDSGHIY) are extracellular. Arg-168 contacts angiotensin II. N-linked (GlcNAc...) asparagine glycosylation occurs at Asn-177. Tyr-185 and Lys-200 together coordinate angiotensin II. The helical transmembrane segment at 192–217 (FMVGMSLAKNIVGFLIPFLIILTSYT) threads the bilayer. Over 218–238 (LIGKTLKEVYRAQRARNDDIF) the chain is Cytoplasmic. Residues 239 to 267 (KMIVAVVLLFFFCWIPYQVFTFLDVLIQM) traverse the membrane as a helical segment. The Extracellular portion of the chain corresponds to 268 to 277 (DVIQNCKMYD). A helical transmembrane segment spans residues 278–303 (IVDTGMPITICIAYFNSCLNPFLYGF). The Cytoplasmic portion of the chain corresponds to 304–362 (FGKNFRKHFLQLIKYIPPKMRTHASVNTKSSLVSSSLSDTKRASKKIALQMTDNEEHCK). Cys-361 carries the S-palmitoyl cysteine lipid modification.

This sequence belongs to the G-protein coupled receptor 1 family. In terms of processing, C-terminal Ser or Thr residues may be phosphorylated. Expressed in lung, liver, kidney, and spleen, with highest expression in the heart.

It localises to the cell membrane. Receptor for angiotensin II, a vasoconstricting peptide, which acts as a key regulator of blood pressure and sodium retention by the kidney. The activated receptor in turn couples to G-alpha proteins G(q) (GNAQ, GNA11, GNA14 or GNA15) and thus activates phospholipase C and increases the cytosolic Ca(2+) concentrations, which in turn triggers cellular responses such as stimulation of protein kinase C. The protein is Type-1 angiotensin II receptor A (agtr1-a) of Xenopus laevis (African clawed frog).